The primary structure comprises 136 residues: uncharacterized protein (136 aa).

4 helical membrane-spanning segments follow: residues 10-32, 44-66, 70-89, and 102-124; these read SAGI…FIWI, LRCG…ILHF, VLLL…KTLL, and IAGV…WLLF.

The protein resides in the cell membrane. This is an uncharacterized protein from Archaeoglobus fulgidus (strain ATCC 49558 / DSM 4304 / JCM 9628 / NBRC 100126 / VC-16).